The sequence spans 927 residues: LPS-assembly protein LptD (927 aa).

The first 22 residues, 1–22 (MALKSPAFRKKFPLLVTGSLLA), serve as a signal peptide directing secretion. A disordered region spans residues 60–100 (LPPRPVHSTASVSSNGTVTSESSSSGEQVAGPQLVTEAKGK). Residues 70 to 86 (SVSSNGTVTSESSSSGE) show a composition bias toward low complexity.

This sequence belongs to the LptD family. In terms of assembly, component of the lipopolysaccharide transport and assembly complex. Interacts with LptE and LptA.

The protein localises to the cell outer membrane. Its function is as follows. Together with LptE, is involved in the assembly of lipopolysaccharide (LPS) at the surface of the outer membrane. This chain is LPS-assembly protein LptD, found in Pseudomonas syringae pv. tomato (strain ATCC BAA-871 / DC3000).